The primary structure comprises 254 residues: 3-deoxy-manno-octulosonate cytidylyltransferase (254 aa).

The protein belongs to the KdsB family.

It is found in the cytoplasm. It carries out the reaction 3-deoxy-alpha-D-manno-oct-2-ulosonate + CTP = CMP-3-deoxy-beta-D-manno-octulosonate + diphosphate. It participates in nucleotide-sugar biosynthesis; CMP-3-deoxy-D-manno-octulosonate biosynthesis; CMP-3-deoxy-D-manno-octulosonate from 3-deoxy-D-manno-octulosonate and CTP: step 1/1. It functions in the pathway bacterial outer membrane biogenesis; lipopolysaccharide biosynthesis. In terms of biological role, activates KDO (a required 8-carbon sugar) for incorporation into bacterial lipopolysaccharide in Gram-negative bacteria. The polypeptide is 3-deoxy-manno-octulosonate cytidylyltransferase (Bordetella petrii (strain ATCC BAA-461 / DSM 12804 / CCUG 43448)).